A 344-amino-acid polypeptide reads, in one-letter code: Adenosine kinase (344 aa).

Aspartate 298 is an active-site residue.

Belongs to the carbohydrate kinase PfkB family. Requires Mg(2+) as cofactor.

The enzyme catalyses adenosine + ATP = AMP + ADP + H(+). Its pathway is purine metabolism; AMP biosynthesis via salvage pathway; AMP from adenosine: step 1/1. This is Adenosine kinase (ADK) from Schizophyllum commune (Split gill fungus).